The chain runs to 510 residues: Probable RNA-binding protein 46 (510 aa).

The interval glutamate 23–proline 42 is disordered. The span at glycine 31–proline 42 shows a compositional bias: pro residues. 3 RRM domains span residues arginine 45 to aspartate 123, cysteine 125 to proline 207, and arginine 220 to proline 292.

In terms of tissue distribution, expressed in the testis and ovary.

Its subcellular location is the cytoplasm. Its function is as follows. Essential for male and female fertility, playing a crucial role in regulating germ cell development by ensuring the proper progression of meiosis prophase I. This is Probable RNA-binding protein 46 (rbm46) from Danio rerio (Zebrafish).